Consider the following 579-residue polypeptide: Arginine--tRNA ligase (579 aa).

Positions 123–133 (PNLAKEMHVGH) match the 'HIGH' region motif.

The protein belongs to the class-I aminoacyl-tRNA synthetase family. As to quaternary structure, monomer.

The protein localises to the cytoplasm. The catalysed reaction is tRNA(Arg) + L-arginine + ATP = L-arginyl-tRNA(Arg) + AMP + diphosphate. This Saccharophagus degradans (strain 2-40 / ATCC 43961 / DSM 17024) protein is Arginine--tRNA ligase.